Here is a 1380-residue protein sequence, read N- to C-terminus: Mitogen-activated protein kinase kinase kinase 5 (1380 aa).

The interval 30 to 97 (CRRGGGAATA…GNSGSGGGRR (68 aa)) is disordered. Residues 37–49 (ATAAEGEPSLQPL) are compositionally biased toward low complexity. Positions 50-59 (LVPPPPPPPG) are enriched in pro residues. Residues Arg-85 and Arg-87 each carry the asymmetric dimethylarginine modification. Ser-90 carries the post-translational modification Phosphoserine; by PIM1 and PKB/AKT1. The tract at residues 649-1374 (HCKRFFEMVN…MLCTLWKAII (726 aa)) is interaction with PPIA/CYPA. The Protein kinase domain maps to 687 to 945 (NGDRVVLGKG…ANDLLIDEFL (259 aa)). ATP-binding positions include 693–701 (LGKGTYGIV) and Lys-716. The residue at position 725 (Tyr-725) is a Phosphotyrosine. Asp-810 functions as the Proton acceptor in the catalytic mechanism. Thr-820 is modified (phosphothreonine; by autocatalysis). Residue Thr-845 is modified to Phosphothreonine; by autocatalysis, MELK and MAP3K6. Residue Thr-849 is modified to Phosphothreonine; by autocatalysis. Ser-965 is subject to Phosphoserine. Ser-973 carries the phosphoserine; by autocatalysis modification. A phosphoserine mark is found at Ser-1036 and Ser-1040. Positions 1188 to 1215 (ASESDTADPEDLDVEDEHEELSSNQTVR) are disordered. Acidic residues predominate over residues 1192–1206 (DTADPEDLDVEDEHE). Residues 1252–1292 (LGRMKIETNRLLEELVRKERELQALLHQAIEEKDQEIRHLK) are a coiled coil.

Belongs to the protein kinase superfamily. STE Ser/Thr protein kinase family. MAP kinase kinase kinase subfamily. In terms of assembly, homodimer when inactive. Binds both upstream activators and downstream substrates in multimolecular complexes. Part of a cytoplasmic complex made of HIPK1, DAB2IP and MAP3K5 in response to TNF. This complex formation promotes MAP3K5-JNK activation and subsequent apoptosis. Interacts with SOCS1 which recognizes phosphorylation of Tyr-725 and induces MAP3K5/ASK1 degradation in endothelial cells. Interacts with the 14-3-3 family proteins such as YWHAB, YWHAE, YWHAQ, YWHAH, YWHAZ and SFN. Interacts with ARRB2, BIRC2, DAB2IP, IGF1R, MAP3K6/ASK2, PIM1, PGAM5, SOCS1, STUB1, TRAF2 and TXN. Interacts with ERN1 in a TRAF2-dependent manner. Interacts with calcineurin subunit PPP3R1, PPP5C, PPM1L and TRAF6. Interacts (via N-terminus) with RAF1 and this interaction inhibits the proapoptotic function of MAP3K5. Interacts with DAB2IP (via N-terminus C2 domain); the interaction occurs in a TNF-alpha-dependent manner. Interacts with DUSP13A; may positively regulate apoptosis. Interacts with PPIA/CYPA. Interacts with PRMT1; the interaction results in MAP3K5 methylation by PRMT1 which inhibits MAP3K5 activation. Interacts with TRAF2; the interaction is inhibited by PRMT1. Interacts with TRIM48. Mg(2+) is required as a cofactor. In terms of processing, ser-90 and Ser-1040 are inactivating phosphorylation sites, the former of which is phosphorylated by AKT1. Phosphorylated at Ser-973 which induces association of MAP3K5/ASK1 with the 14-3-3 family proteins and suppresses MAP3K5/ASK1 activity. Calcineurin (CN) dephosphorylates this site. Also dephosphorylated and activated by PGAM5. Phosphorylated at Thr-845 through autophosphorylation and by MAP3K6/ASK2 which leads to activation. Thr-845 is dephosphorylated by PPP5C. Phosphorylation at Ser-973 in response to oxidative stress is negatively regulated by PPIA/CYPA. Post-translationally, ubiquitinated. Tumor necrosis factor (TNF) induces TNFR2-dependent ubiquitination, leading to proteasomal degradation. Ubiquitinated by RC3H2 in a TRIM48-dependent manner. Methylation at Arg-85 and Arg-87 by PRMT1 promotes association of MAP3K5 with thioredoxin and negatively regulates MAP3K5 association with TRAF2, inhibiting MAP3K5 activation. Methylation is blocked by ubiquitination of PRMT1 by TRIM48. In terms of tissue distribution, expressed in various adult mouse tissues including heart, brain, lung, liver and kidney.

It localises to the cytoplasm. The protein resides in the endoplasmic reticulum. The enzyme catalyses L-seryl-[protein] + ATP = O-phospho-L-seryl-[protein] + ADP + H(+). It catalyses the reaction L-threonyl-[protein] + ATP = O-phospho-L-threonyl-[protein] + ADP + H(+). Its activity is regulated as follows. Activated by various stressors, including oxidative stress, endoplasmic reticulum stress, and calcium overload, as well as by receptor-mediated inflammatory signals, such as the tumor necrosis factor (TNF) and lipopolysaccharide (LPS). Homophilic association of MAP3K5/ASK1 through the C-terminal coiled-coil domains and the heteromeric complex formation of MAP3K5/ASK1 with the reduced form of thioredoxin (TXN), constitutes an inactive form of the kinase. Upon ROS-induced dissociation of TXN from MAP3K5/ASK1, TRAF2 and TRAF6 are reciprocally recruited to MAP3K5/ASK1 and form the active MAP3K5/ASK1 signalosome, in which TRAF2 and TRAF6 appear to facilitate the active configuration of MAP3K5/ASK1. MAP3K5/ASK1 activity is also regulated through several phosphorylation and dephosphorylation events. Thr-845 is an activating phosphorylation site that is autophosphorylated and phosphorylated by MAP3K6/ASK2 and dephosphorylated by PPP5C. Ser-90 and Ser-1040 are inactivating phosphorylation sites, the former of which is phosphorylated by AKT1. Phosphorylation of Ser-973 induces association of MAP3K5/ASK1 with the 14-3-3 family proteins, which suppresses MAP3K5/ASK1 activity. Calcium/calmodulin-activated protein phosphatase calcineurin (PPP3CA) has been shown to directly dephosphorylate this site. SOCS1 binds to ASK1 by recognizing phosphorylation of Tyr-725 and induces MAP3K5/ASK1 degradation in endothelial cells. Also dephosphorylated and activated by PGAM5. Contains an N-terminal autoinhibitory domain. Its function is as follows. Serine/threonine kinase which acts as an essential component of the MAP kinase signal transduction pathway. Plays an important role in the cascades of cellular responses evoked by changes in the environment. Mediates signaling for determination of cell fate such as differentiation and survival. Plays a crucial role in the apoptosis signal transduction pathway through mitochondria-dependent caspase activation. MAP3K5/ASK1 is required for the innate immune response, which is essential for host defense against a wide range of pathogens. Mediates signal transduction of various stressors like oxidative stress as well as by receptor-mediated inflammatory signals, such as the tumor necrosis factor (TNF) or lipopolysaccharide (LPS). Once activated, acts as an upstream activator of the MKK/JNK signal transduction cascade and the p38 MAPK signal transduction cascade through the phosphorylation and activation of several MAP kinase kinases like MAP2K4/SEK1, MAP2K3/MKK3, MAP2K6/MKK6 and MAP2K7/MKK7. These MAP2Ks in turn activate p38 MAPKs and c-jun N-terminal kinases (JNKs). Both p38 MAPK and JNKs control the transcription factors activator protein-1 (AP-1). In Mus musculus (Mouse), this protein is Mitogen-activated protein kinase kinase kinase 5 (Map3k5).